A 193-amino-acid polypeptide reads, in one-letter code: Phosphatidylglycerophosphatase and protein-tyrosine phosphatase 1 (193 aa).

The N-terminal 31 residues, 1-31, are a transit peptide targeting the mitochondrion; the sequence is MAASAWLEAGLARVLFYPTLLYTVFRGRVGG. The Tyrosine-protein phosphatase domain maps to 37-188; sequence WYHRIDHTVL…LKEFHKEIAA (152 aa). Lys85 carries the N6-succinyllysine modification. Catalysis depends on Cys132, which acts as the Phosphocysteine intermediate.

It belongs to the protein-tyrosine phosphatase family. Non-receptor class dual specificity subfamily. Interacts with STYXL1; the interaction inhibits PTPMT1 catalytic activity. Expressed in liver and in pancreatic beta cells.

The protein localises to the mitochondrion inner membrane. It catalyses the reaction O-phospho-L-tyrosyl-[protein] + H2O = L-tyrosyl-[protein] + phosphate. The enzyme catalyses O-phospho-L-seryl-[protein] + H2O = L-seryl-[protein] + phosphate. It carries out the reaction O-phospho-L-threonyl-[protein] + H2O = L-threonyl-[protein] + phosphate. The catalysed reaction is a 1,2-diacyl-sn-glycero-3-phospho-(1'-sn-glycero-3'-phosphate) + H2O = a 1,2-diacyl-sn-glycero-3-phospho-(1'-sn-glycerol) + phosphate. It catalyses the reaction 1,2-di-(9Z-octadecenoyl)-sn-glycero-3-phospho-(1'-sn-glycerol-3'-phosphate) + H2O = 1,2-di-(9Z-octadecenoyl)-sn-glycero-3-phospho-(1'-sn-glycerol) + phosphate. The enzyme catalyses 1,2-dioctanoyl-sn-glycero-3-phospho-(1D-myo-inositol-5-phosphate) + H2O = 1,2-dioctanoyl-sn-glycero-3-phospho-(1D-myo-inositol) + phosphate. It carries out the reaction a 1-acyl-2-hexanoyl-sn-glycero-3-phospho-(1D-myo-inositol-5-phosphate) + H2O = a 1-acyl-2-hexanoyl-sn-glycero-3-phospho-(1D-myo-inositol) + phosphate. The catalysed reaction is 1,2-dibutyryl-sn-glycero-3-phospho-(1D-myo-inositol-5-phosphate) + H2O = 1,2-dibutyryl-sn-glycero-3-phospho-(1D-myo-inositol) + phosphate. It participates in phospholipid metabolism; phosphatidylglycerol biosynthesis; phosphatidylglycerol from CDP-diacylglycerol: step 2/2. In terms of biological role, lipid phosphatase which dephosphorylates phosphatidylglycerophosphate (PGP) to phosphatidylglycerol (PG). PGP is an essential intermediate in the biosynthetic pathway of cardiolipin, a mitochondrial-specific phospholipid regulating the membrane integrity and activities of the organelle. Has also been shown to display phosphatase activity toward phosphoprotein substrates, specifically mediates dephosphorylation of mitochondrial proteins, thereby playing an essential role in ATP production. Has probably a preference for proteins phosphorylated on Ser and/or Thr residues compared to proteins phosphorylated on Tyr residues. Probably involved in regulation of insulin secretion in pancreatic beta cells. May prevent intrinsic apoptosis, probably by regulating mitochondrial membrane integrity. This is Phosphatidylglycerophosphatase and protein-tyrosine phosphatase 1 from Rattus norvegicus (Rat).